A 332-amino-acid polypeptide reads, in one-letter code: NADH-quinone oxidoreductase subunit H (332 aa).

The next 9 membrane-spanning stretches (helical) occupy residues 4–24, 44–64, 78–98, 120–140, 165–185, 194–214, 255–275, 279–299, and 312–332; these read FAFF…IFAS, IGPD…MIKL, FIFA…LAAI, VALL…FLGG, VGAL…LVDI, FSWL…ALFI, IAGA…FWII, IMMI…RAAF, and YLIL…TVLL.

Belongs to the complex I subunit 1 family. NDH-1 is composed of 14 different subunits. Subunits NuoA, H, J, K, L, M, N constitute the membrane sector of the complex.

The protein resides in the cell inner membrane. It catalyses the reaction a quinone + NADH + 5 H(+)(in) = a quinol + NAD(+) + 4 H(+)(out). Functionally, NDH-1 shuttles electrons from NADH, via FMN and iron-sulfur (Fe-S) centers, to quinones in the respiratory chain. The immediate electron acceptor for the enzyme in this species is believed to be ubiquinone. Couples the redox reaction to proton translocation (for every two electrons transferred, four hydrogen ions are translocated across the cytoplasmic membrane), and thus conserves the redox energy in a proton gradient. This subunit may bind ubiquinone. The chain is NADH-quinone oxidoreductase subunit H from Campylobacter jejuni subsp. jejuni serotype O:23/36 (strain 81-176).